A 97-amino-acid chain; its full sequence is YcgL domain-containing protein Avin_32960 (97 aa).

Residues 3-87 form the YcgL domain; sequence CICSIYKSPR…PEEEYVEHLP (85 aa).

This Azotobacter vinelandii (strain DJ / ATCC BAA-1303) protein is YcgL domain-containing protein Avin_32960.